A 583-amino-acid chain; its full sequence is Protein cps3 (583 aa).

2 C3H1-type zinc fingers span residues 35 to 62 (SLQHVPCKFFRQGTCTSGKNCIFSHDLE) and 64 to 91 (ATEKTICKYFQKGNCKFGSKCALEHVLP). Disordered regions lie at residues 318-346 (LGRPTKSPSVPTSVGSNKSRKFPGINGST), 471-490 (KVSSNLNSGNPTPYNSYNGT), and 504-532 (RQESEKATPPSLNKVSQEPLTATTPKNLG). 3 stretches are compositionally biased toward polar residues: residues 323–334 (KSPSVPTSVGSN), 475–490 (NLNSGNPTPYNSYNGT), and 513–532 (PSLNKVSQEPLTATTPKNLG).

The protein resides in the cytoplasm. In terms of biological role, responsible for supersensitivity to the spindle poison, isopropyl N-3-chlorophenyl carbamate. Has a role in meiosis. In Schizosaccharomyces pombe (strain 972 / ATCC 24843) (Fission yeast), this protein is Protein cps3 (cps3).